The following is a 670-amino-acid chain: Pescadillo homolog (670 aa).

The stretch at 292 to 321 (GANQAQAKVKEAESKRSLMEEELLKVRELF) forms a coiled coil. The BRCT domain maps to 316-402 (KVRELFRGLT…QMLPVTGYRI (87 aa)). Positions 643 to 670 (RQRAEAKGKKLKEKKADNPYKKLPKWVQ) are disordered. A compositionally biased stretch (basic and acidic residues) spans 644–662 (QRAEAKGKKLKEKKADNPY).

This sequence belongs to the pescadillo family.

It is found in the nucleus. The protein resides in the nucleolus. It localises to the nucleoplasm. Its function is as follows. Required for maturation of ribosomal RNAs and formation of the large ribosomal subunit. This is Pescadillo homolog from Leishmania braziliensis.